The following is a 160-amino-acid chain: SsrA-binding protein (160 aa).

Positions 132 to 160 (KEFDKRDTVRERDSNRELQRTMRNKGKEE) are disordered.

This sequence belongs to the SmpB family.

It localises to the cytoplasm. Its function is as follows. Required for rescue of stalled ribosomes mediated by trans-translation. Binds to transfer-messenger RNA (tmRNA), required for stable association of tmRNA with ribosomes. tmRNA and SmpB together mimic tRNA shape, replacing the anticodon stem-loop with SmpB. tmRNA is encoded by the ssrA gene; the 2 termini fold to resemble tRNA(Ala) and it encodes a 'tag peptide', a short internal open reading frame. During trans-translation Ala-aminoacylated tmRNA acts like a tRNA, entering the A-site of stalled ribosomes, displacing the stalled mRNA. The ribosome then switches to translate the ORF on the tmRNA; the nascent peptide is terminated with the 'tag peptide' encoded by the tmRNA and targeted for degradation. The ribosome is freed to recommence translation, which seems to be the essential function of trans-translation. The chain is SsrA-binding protein from Pseudomonas entomophila (strain L48).